We begin with the raw amino-acid sequence, 284 residues long: RNase adapter protein RapZ (284 aa).

An ATP-binding site is contributed by 8 to 15 (GRSGSGKS). 56 to 59 (DVRN) is a binding site for GTP. The RNA-binding stretch occupies residues 266-284 (RARGKNVQSRHRTLEKRKQ).

Belongs to the RapZ-like family. RapZ subfamily. In terms of assembly, homotrimer.

In terms of biological role, modulates the synthesis of GlmS, by affecting the processing and stability of the regulatory small RNA GlmZ. When glucosamine-6-phosphate (GlcN6P) concentrations are high in the cell, RapZ binds GlmZ and targets it to cleavage by RNase E. Consequently, GlmZ is inactivated and unable to activate GlmS synthesis. Under low GlcN6P concentrations, RapZ is sequestered and inactivated by an other regulatory small RNA, GlmY, preventing GlmZ degradation and leading to synthesis of GlmS. This chain is RNase adapter protein RapZ, found in Yersinia pseudotuberculosis serotype O:1b (strain IP 31758).